The sequence spans 235 residues: Small ribosomal subunit protein uS2 (235 aa).

Belongs to the universal ribosomal protein uS2 family.

This Geobacillus kaustophilus (strain HTA426) protein is Small ribosomal subunit protein uS2.